A 299-amino-acid polypeptide reads, in one-letter code: Putative S-adenosyl-L-methionine-dependent methyltransferase MAB_0027c (299 aa).

Residues D126 and 155 to 156 each bind S-adenosyl-L-methionine; that span reads DL.

The protein belongs to the UPF0677 family.

In terms of biological role, exhibits S-adenosyl-L-methionine-dependent methyltransferase activity. The sequence is that of Putative S-adenosyl-L-methionine-dependent methyltransferase MAB_0027c from Mycobacteroides abscessus (strain ATCC 19977 / DSM 44196 / CCUG 20993 / CIP 104536 / JCM 13569 / NCTC 13031 / TMC 1543 / L948) (Mycobacterium abscessus).